The following is a 262-amino-acid chain: MPEVPAVRAWPLLLSLALQLGAAAGAPQPLHCAPCSAERLALCPPVPASCPEATRPAGCGCCPTCALPLGACGVATARCARGLSCRALPGEPRPLHALTRGQGACMPAPSAEATETKDPAAPETTSPESTEMTQEQLLDSFHLMATSSEDLPILWNAINNYESMKALEATDIKKWKEPCQRELYKVLDRLAREQQKAGDRLYKFYLPNCNKNGFYHSKQCETSLEGEPGLCWCVYPWSGKKILGSTAVRGDPKCHQYFNSQN.

A signal peptide spans 1–25 (MPEVPAVRAWPLLLSLALQLGAAAG). In terms of domain architecture, IGFBP N-terminal spans 28-108 (QPLHCAPCSA…TRGQGACMPA (81 aa)). 6 disulfides stabilise this stretch: C32–C59, C35–C61, C43–C62, C50–C65, C72–C85, and C79–C105. The tract at residues 101-133 (GQGACMPAPSAEATETKDPAAPETTSPESTEMT) is disordered. A compositionally biased stretch (low complexity) spans 121-131 (APETTSPESTE). Residues S126, S129, and S147 each carry the phosphoserine modification. A Phosphotyrosine modification is found at Y161. The Thyroglobulin type-1 domain maps to 176-254 (KEPCQRELYK…STAVRGDPKC (79 aa)). Cystine bridges form between C179–C209, C220–C231, and C233–C254. S245 is modified (phosphoserine). The short motif at 249–251 (RGD) is the Cell attachment site element.

In terms of assembly, binds equally well IGF1 and IGF2. Interacts with integrin ITGA5:ITGB1. Interacts with VHL; this interaction inhibits HIF1A degradation.

It is found in the secreted. Functionally, multifunctional protein that plays a critical role in regulating the availability of IGFs such as IGF1 and IGF2 to their receptors and thereby regulates IGF-mediated cellular processes including cell migration, proliferation, differentiation or apoptosis in a cell-type specific manner. Also plays a positive role in cell migration by interacting with integrin ITGA5:ITGB1 through its RGD motif. Mechanistically, binding to integrins leads to activation of focal adhesion kinase/PTK2 and stimulation of the mitogen-activated protein kinase (MAPK) pathway. Regulates cardiomyocyte apoptosis by suppressing HIF-1alpha/HIF1A degradation through ubiquitination. This chain is Insulin-like growth factor-binding protein 1 (IGFBP1), found in Sus scrofa (Pig).